Consider the following 263-residue polypeptide: HTH-type transcriptional regulator KdgR (263 aa).

Residues 13–74 form the HTH iclR-type domain; it reads VSSVLKVFGI…GESEKYSLTL (62 aa). The segment at residues 34-53 is a DNA-binding region (H-T-H motif); that stretch reads ITELSQRVMMSKSTVYRFLQ. The IclR-ED domain maps to 89–258; that stretch reads LIRSADIQMR…ARKISAQMGY (170 aa).

It localises to the cytoplasm. Its function is as follows. Transcriptional repressor that negatively regulates the expression of kdgT, kdgK and kdgA, which encode proteins involved in transport and catabolism of 2-keto-3-deoxygluconate (KDG). Also represses expression of eda, which encodes the Entner-Doudoroff aldolase, by binding to its P2 promoter region. The sequence is that of HTH-type transcriptional regulator KdgR from Escherichia coli (strain K12).